A 566-amino-acid polypeptide reads, in one-letter code: T-complex protein 11 homolog (566 aa).

Residues 1–24 are compositionally biased toward basic and acidic residues; the sequence is MPDLKERAARKEPGAAESASRESR. 2 disordered regions span residues 1–112 and 328–347; these read MPDL…HFGA and DIQDPSSSSGPSPSDIAIPE. Over residues 25–37 the composition is skewed to polar residues; it reads GGNTRESASSAQG. A Phosphoserine modification is found at serine 104. Low complexity predominate over residues 332–341; the sequence is PSSSSGPSPS. The chain crosses the membrane as a helical span at residues 393–413; that stretch reads LTILASVLLVASSFSGSVLFG. Position 461 is a phosphoserine (serine 461).

This sequence belongs to the TCP11 family. As to quaternary structure, found in a complex at least composed of MROH2B isoform 2, PRKACA isoform 2 and TCP11. Interacts with MROH2B isoform 2. Interacts with PRKACA isoform 2. Interacts with ODF1 (via leucine zipper motif). In terms of processing, constitutively phosphorylated on serine, threonine and tyrosine residues within the head and tail regions of noncapacitated spermatozoa. Phosphorylation on tyrosine residues increases upon sperm capacitation within the acrosomal region in a protein kinase A (PKA)-dependent signaling pathway.

The protein localises to the membrane. It is found in the cell projection. Its subcellular location is the cilium. It localises to the flagellum. The protein resides in the cytoplasmic vesicle. The protein localises to the secretory vesicle. It is found in the acrosome. Its function is as follows. Plays a role in the process of sperm capacitation and acrosome reactions. Probable receptor for the putative fertilization-promoting peptide (FPP) at the sperm membrane that may modulate the activity of the adenylyl cyclase cAMP pathway. The protein is T-complex protein 11 homolog (Tcp11) of Rattus norvegicus (Rat).